Here is a 244-residue protein sequence, read N- to C-terminus: 1-(5-phosphoribosyl)-5-[(5-phosphoribosylamino)methylideneamino] imidazole-4-carboxamide isomerase (244 aa).

The active-site Proton acceptor is the aspartate 8. Aspartate 129 functions as the Proton donor in the catalytic mechanism.

This sequence belongs to the HisA/HisF family.

The protein localises to the cytoplasm. The catalysed reaction is 1-(5-phospho-beta-D-ribosyl)-5-[(5-phospho-beta-D-ribosylamino)methylideneamino]imidazole-4-carboxamide = 5-[(5-phospho-1-deoxy-D-ribulos-1-ylimino)methylamino]-1-(5-phospho-beta-D-ribosyl)imidazole-4-carboxamide. It functions in the pathway amino-acid biosynthesis; L-histidine biosynthesis; L-histidine from 5-phospho-alpha-D-ribose 1-diphosphate: step 4/9. The chain is 1-(5-phosphoribosyl)-5-[(5-phosphoribosylamino)methylideneamino] imidazole-4-carboxamide isomerase from Bradyrhizobium sp. (strain ORS 278).